The chain runs to 505 residues: Cobyric acid synthase (505 aa).

One can recognise a GATase cobBQ-type domain in the interval 251–444 (DIDVAVIKLP…IHGIFDNSEF (194 aa)). The active-site Nucleophile is cysteine 332. Residue histidine 436 is part of the active site.

This sequence belongs to the CobB/CobQ family. CobQ subfamily.

It functions in the pathway cofactor biosynthesis; adenosylcobalamin biosynthesis. Functionally, catalyzes amidations at positions B, D, E, and G on adenosylcobyrinic A,C-diamide. NH(2) groups are provided by glutamine, and one molecule of ATP is hydrogenolyzed for each amidation. The protein is Cobyric acid synthase of Clostridium novyi (strain NT).